A 167-amino-acid polypeptide reads, in one-letter code: Ubiquitin-fold modifier-conjugating enzyme 1 (167 aa).

The active-site Glycyl thioester intermediate is Cys-116.

The protein belongs to the ubiquitin-conjugating enzyme family. UFC1 subfamily. In terms of assembly, interacts with UBA5 (via C-terminus). Interacts with UFL1. Interacts with UFM1.

Functionally, E2-like enzyme which specifically catalyzes the second step in ufmylation. Accepts the ubiquitin-like modifier UFM1 from the E1 enzyme UBA5 and forms an intermediate with UFM1 via a thioester linkage. Ufmylation is involved in various processes, such as ribosome recycling, response to DNA damage, interferon response or reticulophagy (also called ER-phagy). The chain is Ubiquitin-fold modifier-conjugating enzyme 1 from Osmerus mordax (Rainbow smelt).